Consider the following 116-residue polypeptide: Large ribosomal subunit protein bL20 (116 aa).

Belongs to the bacterial ribosomal protein bL20 family.

In terms of biological role, binds directly to 23S ribosomal RNA and is necessary for the in vitro assembly process of the 50S ribosomal subunit. It is not involved in the protein synthesizing functions of that subunit. This Helicobacter acinonychis (strain Sheeba) protein is Large ribosomal subunit protein bL20.